A 435-amino-acid chain; its full sequence is Actin-like protein 7A (435 aa).

The segment at 1-64 (MWAPPAAIMG…TESKAAKERP (64 aa)) is disordered. The span at 20–31 (QAPLQTQALQTA) shows a compositional bias: low complexity. The tract at residues 31–51 (ASLRDGPAKRAVWVRHTSSEP) is required for interaction with TES. Basic and acidic residues predominate over residues 55–64 (TESKAAKERP).

It belongs to the actin family. In terms of assembly, interacts (via N-terminus) with TES (via LIM domain 2). Heterodimer with TES; the heterodimer interacts with ENAH to form a heterotrimer. Interacts with ACTL9. Interacts with CYLC1; the interaction may be relevant for proper acrosome attachment to the nuclear envelope. In terms of tissue distribution, strongly expressed in testis. Also expressed in other tissues.

The protein localises to the cytoplasm. Its subcellular location is the cytoskeleton. The protein resides in the golgi apparatus. It is found in the nucleus. It localises to the cytoplasmic vesicle. The protein localises to the secretory vesicle. Its subcellular location is the acrosome. Functionally, essential for normal spermatogenesis and male fertility. Required for normal sperm head morphology, acroplaxome formation, acrosome attachment, and acrosome granule stability. May anchor and stabilize acrosomal adherence to the acroplaxome at least in part by facilitating the presence of F-actin in the subacrosomal space. May play an important role in formation and fusion of Golgi-derived vesicles during acrosome biogenesis. In Homo sapiens (Human), this protein is Actin-like protein 7A (ACTL7A).